The following is a 95-amino-acid chain: Aspartyl/glutamyl-tRNA(Asn/Gln) amidotransferase subunit C (95 aa).

It belongs to the GatC family. In terms of assembly, heterotrimer of A, B and C subunits.

It catalyses the reaction L-glutamyl-tRNA(Gln) + L-glutamine + ATP + H2O = L-glutaminyl-tRNA(Gln) + L-glutamate + ADP + phosphate + H(+). It carries out the reaction L-aspartyl-tRNA(Asn) + L-glutamine + ATP + H2O = L-asparaginyl-tRNA(Asn) + L-glutamate + ADP + phosphate + 2 H(+). Functionally, allows the formation of correctly charged Asn-tRNA(Asn) or Gln-tRNA(Gln) through the transamidation of misacylated Asp-tRNA(Asn) or Glu-tRNA(Gln) in organisms which lack either or both of asparaginyl-tRNA or glutaminyl-tRNA synthetases. The reaction takes place in the presence of glutamine and ATP through an activated phospho-Asp-tRNA(Asn) or phospho-Glu-tRNA(Gln). The chain is Aspartyl/glutamyl-tRNA(Asn/Gln) amidotransferase subunit C from Pelodictyon phaeoclathratiforme (strain DSM 5477 / BU-1).